The following is a 387-amino-acid chain: Postreplication repair E3 ubiquitin-protein ligase rad18 (387 aa).

An RING-type zinc finger spans residues C29 to R67. The disordered stretch occupies residues D119–R153. Positions S122–L131 are enriched in acidic residues. The UBZ4-type zinc-finger motif lies at L156–S183. Positions 159, 162, 174, and 178 each coordinate Zn(2+). A disordered region spans residues H174–F206. Low complexity predominate over residues S177–Y192. Residues Y240 to V274 form the SAP domain. The interval K335–S387 is disordered.

This sequence belongs to the RAD18 family. In terms of assembly, interacts with E2 ubc2, forming a complex with ubiquitin ligase activity.

It localises to the nucleus. The catalysed reaction is S-ubiquitinyl-[E2 ubiquitin-conjugating enzyme]-L-cysteine + [acceptor protein]-L-lysine = [E2 ubiquitin-conjugating enzyme]-L-cysteine + N(6)-ubiquitinyl-[acceptor protein]-L-lysine.. It functions in the pathway protein modification; protein ubiquitination. Its function is as follows. E3 RING-finger protein, member of the UBC2/RAD6 epistasis group. Associates to the E2 ubiquitin conjugating enzyme ubc2/rad6 to form the ubc2-rad18 ubiquitin ligase complex involved in postreplicative repair (PRR) of damaged DNA. The polypeptide is Postreplication repair E3 ubiquitin-protein ligase rad18 (rhp18) (Schizosaccharomyces pombe (strain 972 / ATCC 24843) (Fission yeast)).